A 137-amino-acid chain; its full sequence is Probable leaf thionin (137 aa).

Residues 1–28 (MATNKSIKSVVICVLILGLVLEQVQVEG) form the signal peptide. Cystine bridges form between Cys31–Cys68, Cys32–Cys60, Cys40–Cys58, and Cys44–Cys54. Positions 75–137 (LNLLPESGEP…DGDVIQSVEA (63 aa)) are cleaved as a propeptide — acidic domain.

This sequence belongs to the plant thionin (TC 1.C.44) family. 4 C-C subfamily.

It localises to the secreted. Its function is as follows. Thionins are small plant proteins which are toxic to animal cells. They seem to exert their toxic effect at the level of the cell membrane. Their precise function is not known. The polypeptide is Probable leaf thionin (Hordeum vulgare (Barley)).